The primary structure comprises 366 residues: MAVKKACEMFPKSLIEDVHKWGCMKQTGVSLRYMMEFGSKPTERNLLISAQFLHKELPIRVARRAIELQTLPYGLSDKPAVLKVRDWYLESFRDMRAFPEIKDSGDEKDFTQMIKAVKVRHNNVVPMMALGVNQLKKGMNSGNLDEIHQFLDRFYLSRIGIRMLIGQHVELHNPNPPLHTVGYIHTKMSPMEVARNASEDARSICFREYGSAPEINIYGDPSFTFPYVPTHLHLMMYELVKNSLRAVQERFVDSDRVAPPIRIIVADGIEDVTIKVSDEGGGIARSGLPRIFTYLYSTARNPLEEDVDLGIADVPVTMAGYGYGLPISRLYARYFGGDLQIISMEGYGTDAYLHLSRLGDSQEPLP.

The residue at position 121 (histidine 121) is a Phosphohistidine; by autocatalysis. A Histidine kinase domain is found at 122-359 (NNVVPMMALG…DAYLHLSRLG (238 aa)). ATP-binding positions include 238-245 (ELVKNSLR), aspartate 278, 297-298 (ST), and 320-325 (GYGYGL).

It belongs to the PDK/BCKDK protein kinase family. Homodimer. Post-translationally, autophosphorylated on Ser residues near N-terminus. Expressed constitutively and ubiquitously.

It localises to the mitochondrion. It catalyses the reaction L-seryl-[pyruvate dehydrogenase E1 alpha subunit] + ATP = O-phospho-L-seryl-[pyruvate dehydrogenase E1 alpha subunit] + ADP + H(+). Treatment with the His-directed reagents diethyl pyrocarbonate (DEPC) and dichloro-(2,2*:6*,2(-terpyridine))-platinum(II) dihydrate inhibits kinase activity, including autophosphorylation. Serine protein kinase that inhibits the mitochondrial pyruvate dehydrogenase (PDH) complex (mtPDC) by phosphorylation of the E1 alpha subunit on Ser residues, thus contributing to the regulation of glucose metabolism. This Arabidopsis thaliana (Mouse-ear cress) protein is [Pyruvate dehydrogenase (acetyl-transferring)] kinase, mitochondrial (PDK).